We begin with the raw amino-acid sequence, 142 residues long: Large ribosomal subunit protein uL11 (142 aa).

Belongs to the universal ribosomal protein uL11 family. As to quaternary structure, part of the ribosomal stalk of the 50S ribosomal subunit. Interacts with L10 and the large rRNA to form the base of the stalk. L10 forms an elongated spine to which L12 dimers bind in a sequential fashion forming a multimeric L10(L12)X complex. One or more lysine residues are methylated.

In terms of biological role, forms part of the ribosomal stalk which helps the ribosome interact with GTP-bound translation factors. The chain is Large ribosomal subunit protein uL11 from Afipia carboxidovorans (strain ATCC 49405 / DSM 1227 / KCTC 32145 / OM5) (Oligotropha carboxidovorans).